The sequence spans 357 residues: Protein-glutamate methylesterase/protein-glutamine glutaminase 1 (357 aa).

The region spanning 7–125 is the Response regulatory domain; that stretch reads RAVIIDDSLL…QFDPEEIGNI (119 aa). D58 is subject to 4-aspartylphosphate. A CheB-type methylesterase domain is found at 162-344; it reads KKSPIQAICI…VEYIEPVTEI (183 aa). Residues S174, H201, and D297 contribute to the active site.

It belongs to the CheB family. In terms of processing, phosphorylated by CheA. Phosphorylation of the N-terminal regulatory domain activates the methylesterase activity.

It localises to the cytoplasm. The catalysed reaction is [protein]-L-glutamate 5-O-methyl ester + H2O = L-glutamyl-[protein] + methanol + H(+). It carries out the reaction L-glutaminyl-[protein] + H2O = L-glutamyl-[protein] + NH4(+). Involved in chemotaxis. Part of a chemotaxis signal transduction system that modulates chemotaxis in response to various stimuli. Catalyzes the demethylation of specific methylglutamate residues introduced into the chemoreceptors (methyl-accepting chemotaxis proteins or MCP) by CheR. Also mediates the irreversible deamidation of specific glutamine residues to glutamic acid. In Leptospira interrogans serogroup Icterohaemorrhagiae serovar Lai (strain 56601), this protein is Protein-glutamate methylesterase/protein-glutamine glutaminase 1.